The chain runs to 482 residues: Ras GTPase-activating protein-binding protein 2 (482 aa).

The 123-residue stretch at 11-133 (VGREFVRQYY…FYVHNDMFRY (123 aa)) folds into the NTF2 domain. Positions 140–158 (DSEPELDEESEDEVEEEQE) are enriched in acidic residues. Disordered regions lie at residues 140-170 (DSEP…VQEN) and 187-318 (EPLE…EQND). 3 positions are modified to phosphoserine: serine 141, serine 149, and serine 225. Residues 142–220 (EPELDEESED…PQVEEKHLEE (79 aa)) form an acidic disordered region region. The span at 191-225 (ESSHEPEPEPESETKTEELKPQVEEKHLEELEEKS) shows a compositional bias: basic and acidic residues. Threonine 227 is subject to Phosphothreonine. The segment covering 247–264 (ASVTSKNLPPSGTVSSSG) has biased composition (polar residues). Lysine 281 participates in a covalent cross-link: Glycyl lysine isopeptide (Lys-Gly) (interchain with G-Cter in SUMO2). The span at 290–300 (RVREQRPRERP) shows a compositional bias: basic and acidic residues. An RRM domain is found at 331–409 (HQLFVGNLPH…VRLNVEEKKT (79 aa)). Position 392 is an N6-succinyllysine (lysine 392). Positions 404–476 (VEEKKTRAAR…GRGTGQMEGR (73 aa)) are RG-rich region. Positions 408-432 (KTRAARERETRGGGDDRRDIRRNDR) are enriched in basic and acidic residues. The segment at 408–482 (KTRAARERET…MEGRFTGQRR (75 aa)) is disordered. Positions 433–445 (GPGGPRGIVGGGM) are enriched in gly residues. The residue at position 457 (arginine 457) is an Omega-N-methylarginine. Serine 466 is subject to Phosphoserine. An Omega-N-methylarginine modification is found at arginine 468.

Forms homooligomers. Forms heterodimers with G3BP1. Interacts with NFKBIA (via N-terminus). Interacts (via NTF2 domain) with USP10; inhibiting stress granule formation. Interacts (via NTF2 domain) with CAPRIN1; promoting stress granule formation. Associates (via RG-rich region) with 40S ribosome subunits. Interacts with PABPC1.

It is found in the cytoplasm. The protein localises to the stress granule. Its activity is regulated as follows. Under physiological conditions, G3BP2 adopts a compact state that is stabilized by intramolecular interactions between the RG-rich and the acidic regions that inhibit phase separation. Upon stress, polysomes disassemble and mRNAs are released in an unfolded protein-free state. Binding of unfolded mRNA to G3BP2 outcompetes the intramolecular interactions and RNA-bound G3BP2 adopts an expanded conformation in which the RG-rich region becomes exposed to engage in protein-protein and protein-RNA interactions, allowing physical cross-linking of RNA molecules to form protein-RNA condensates, leading to liquid-liquid phase separation (LLPS). Functionally, scaffold protein that plays an essential role in cytoplasmic stress granule formation which acts as a platform for antiviral signaling. Plays an essential role in stress granule formation. Stress granules are membraneless compartments that store mRNAs and proteins, such as stalled translation pre-initiation complexes, in response to stress. Promotes formation of stress granules phase-separated membraneless compartment by undergoing liquid-liquid phase separation (LLPS) upon unfolded RNA-binding: functions as a molecular switch that triggers RNA-dependent LLPS in response to a rise in intracellular free RNA concentrations. The protein is Ras GTPase-activating protein-binding protein 2 (G3bp2) of Mus musculus (Mouse).